Consider the following 474-residue polypeptide: 3-isopropylmalate dehydratase large subunit (474 aa).

[4Fe-4S] cluster-binding residues include Cys-353, Cys-414, and Cys-417.

It belongs to the aconitase/IPM isomerase family. LeuC type 1 subfamily. Heterodimer of LeuC and LeuD. Requires [4Fe-4S] cluster as cofactor.

The catalysed reaction is (2R,3S)-3-isopropylmalate = (2S)-2-isopropylmalate. Its pathway is amino-acid biosynthesis; L-leucine biosynthesis; L-leucine from 3-methyl-2-oxobutanoate: step 2/4. In terms of biological role, catalyzes the isomerization between 2-isopropylmalate and 3-isopropylmalate, via the formation of 2-isopropylmaleate. This chain is 3-isopropylmalate dehydratase large subunit, found in Pseudomonas aeruginosa (strain LESB58).